A 321-amino-acid polypeptide reads, in one-letter code: GDP-L-fucose synthase (321 aa).

NADP(+)-binding positions include 10 to 16, 36 to 41, and 105 to 108; these read GHRGMVG, RDELNL, and LGSS. Tyr136 functions as the Proton donor/acceptor in the catalytic mechanism. Residues Lys140, 163–166, and His179 each bind NADP(+); that span reads PTNL. Substrate contacts are provided by Arg187, Trp202, Arg209, and Asp278.

Belongs to the NAD(P)-dependent epimerase/dehydratase family. Fucose synthase subfamily. Homodimer.

It localises to the cytoplasm. The enzyme catalyses GDP-beta-L-fucose + NADP(+) = GDP-4-dehydro-alpha-D-rhamnose + NADPH + H(+). Its pathway is nucleotide-sugar biosynthesis; GDP-L-fucose biosynthesis via de novo pathway; GDP-L-fucose from GDP-alpha-D-mannose: step 2/2. The protein operates within exopolysaccharide biosynthesis; colanic acid biosynthesis. With respect to regulation, subject to product inhibition by NADP and GDP-fucose. In terms of biological role, catalyzes the two-step NADP-dependent conversion of GDP-4-dehydro-6-deoxy-D-mannose to GDP-fucose, involving an epimerase and a reductase reaction. The sequence is that of GDP-L-fucose synthase from Escherichia coli (strain K12).